The sequence spans 752 residues: Photosystem I P700 chlorophyll a apoprotein A1 (752 aa).

8 consecutive transmembrane segments (helical) span residues 73–96 (IFSA…FHGA), 159–182 (LYVT…FHYH), 198–222 (MNHH…HVSL), 294–312 (RAHH…GHMY), 349–372 (WHAQ…HHMY), 388–414 (LCLF…IFMV), 436–458 (AIIS…LYIH), and 533–551 (FLVH…LILL). 2 residues coordinate [4Fe-4S] cluster: cysteine 575 and cysteine 584. The next 2 membrane-spanning stretches (helical) occupy residues 591–612 (HVFL…HFSW) and 666–688 (LSAY…MFLF). Histidine 677 contacts chlorophyll a'. 2 residues coordinate chlorophyll a: methionine 685 and tyrosine 693. Tryptophan 694 serves as a coordination point for phylloquinone. The helical transmembrane segment at 726-746 (AVGVAHYLLGGIATTWSFFHA) threads the bilayer.

The protein belongs to the PsaA/PsaB family. As to quaternary structure, the PsaA/B heterodimer binds the P700 chlorophyll special pair and subsequent electron acceptors. PSI consists of a core antenna complex that captures photons, and an electron transfer chain that converts photonic excitation into a charge separation. The eukaryotic PSI reaction center is composed of at least 11 subunits. P700 is a chlorophyll a/chlorophyll a' dimer, A0 is one or more chlorophyll a, A1 is one or both phylloquinones and FX is a shared 4Fe-4S iron-sulfur center. is required as a cofactor.

The protein resides in the plastid. Its subcellular location is the cyanelle thylakoid membrane. The enzyme catalyses reduced [plastocyanin] + hnu + oxidized [2Fe-2S]-[ferredoxin] = oxidized [plastocyanin] + reduced [2Fe-2S]-[ferredoxin]. PsaA and PsaB bind P700, the primary electron donor of photosystem I (PSI), as well as the electron acceptors A0, A1 and FX. PSI is a cytochrome c6-ferredoxin oxidoreductase, converting photonic excitation into a charge separation, which transfers an electron from the donor P700 chlorophyll pair to the spectroscopically characterized acceptors A0, A1, FX, FA and FB in turn. Oxidized P700 is reduced on the lumenal side of the thylakoid membrane by cytochrome c6. This chain is Photosystem I P700 chlorophyll a apoprotein A1, found in Cyanophora paradoxa.